A 509-amino-acid polypeptide reads, in one-letter code: Histidine--tRNA ligase (509 aa).

Belongs to the class-II aminoacyl-tRNA synthetase family. In terms of assembly, homodimer.

It is found in the cytoplasm. It catalyses the reaction tRNA(His) + L-histidine + ATP = L-histidyl-tRNA(His) + AMP + diphosphate + H(+). In Rhodopseudomonas palustris (strain TIE-1), this protein is Histidine--tRNA ligase.